The chain runs to 158 residues: Crossover junction endodeoxyribonuclease RuvC (158 aa).

Catalysis depends on residues Asp-7, Glu-66, and Asp-139. Residues Asp-7, Glu-66, and Asp-139 each coordinate Mg(2+).

This sequence belongs to the RuvC family. In terms of assembly, homodimer which binds Holliday junction (HJ) DNA. The HJ becomes 2-fold symmetrical on binding to RuvC with unstacked arms; it has a different conformation from HJ DNA in complex with RuvA. In the full resolvosome a probable DNA-RuvA(4)-RuvB(12)-RuvC(2) complex forms which resolves the HJ. The cofactor is Mg(2+).

The protein localises to the cytoplasm. It carries out the reaction Endonucleolytic cleavage at a junction such as a reciprocal single-stranded crossover between two homologous DNA duplexes (Holliday junction).. In terms of biological role, the RuvA-RuvB-RuvC complex processes Holliday junction (HJ) DNA during genetic recombination and DNA repair. Endonuclease that resolves HJ intermediates. Cleaves cruciform DNA by making single-stranded nicks across the HJ at symmetrical positions within the homologous arms, yielding a 5'-phosphate and a 3'-hydroxyl group; requires a central core of homology in the junction. The consensus cleavage sequence is 5'-(A/T)TT(C/G)-3'. Cleavage occurs on the 3'-side of the TT dinucleotide at the point of strand exchange. HJ branch migration catalyzed by RuvA-RuvB allows RuvC to scan DNA until it finds its consensus sequence, where it cleaves and resolves the cruciform DNA. In Carboxydothermus hydrogenoformans (strain ATCC BAA-161 / DSM 6008 / Z-2901), this protein is Crossover junction endodeoxyribonuclease RuvC.